The chain runs to 223 residues: MVKFAVVVFPGTNCDFETVEAIKRAGGKAERVWYKDSIKDYDGVVIPGGFSYADYLRAGAIAARQRIMEEIRELAEEGRPILGICNGFQILTEAGLLPGALRPNKIPRFLCKWVHLKVVDVRTPFTYLYEEGEVVRMPIAHAEGNYYIDDPSKVRIVFQYSDEKGSITEEANPNGSVLNIAGVANMEGNILGMMPHPERASHYFLGSEDGLKVFKGMVEWVRS.

The Glutamine amidotransferase type-1 domain occupies 4–223 (FAVVVFPGTN…FKGMVEWVRS (220 aa)). Cys-85 serves as the catalytic Nucleophile. Residues His-196 and Glu-198 contribute to the active site.

As to quaternary structure, part of the FGAM synthase complex composed of 1 PurL, 1 PurQ and 2 PurS subunits.

Its subcellular location is the cytoplasm. It carries out the reaction N(2)-formyl-N(1)-(5-phospho-beta-D-ribosyl)glycinamide + L-glutamine + ATP + H2O = 2-formamido-N(1)-(5-O-phospho-beta-D-ribosyl)acetamidine + L-glutamate + ADP + phosphate + H(+). It catalyses the reaction L-glutamine + H2O = L-glutamate + NH4(+). The protein operates within purine metabolism; IMP biosynthesis via de novo pathway; 5-amino-1-(5-phospho-D-ribosyl)imidazole from N(2)-formyl-N(1)-(5-phospho-D-ribosyl)glycinamide: step 1/2. In terms of biological role, part of the phosphoribosylformylglycinamidine synthase complex involved in the purines biosynthetic pathway. Catalyzes the ATP-dependent conversion of formylglycinamide ribonucleotide (FGAR) and glutamine to yield formylglycinamidine ribonucleotide (FGAM) and glutamate. The FGAM synthase complex is composed of three subunits. PurQ produces an ammonia molecule by converting glutamine to glutamate. PurL transfers the ammonia molecule to FGAR to form FGAM in an ATP-dependent manner. PurS interacts with PurQ and PurL and is thought to assist in the transfer of the ammonia molecule from PurQ to PurL. The sequence is that of Phosphoribosylformylglycinamidine synthase subunit PurQ from Pyrococcus furiosus (strain ATCC 43587 / DSM 3638 / JCM 8422 / Vc1).